The sequence spans 638 residues: Phosphomethylpyrimidine synthase (638 aa).

Substrate contacts are provided by residues Asn-233, Met-262, Tyr-291, His-327, 347 to 349 (SRG), 388 to 391 (DGLR), and Glu-427. His-431 is a binding site for Zn(2+). Tyr-454 lines the substrate pocket. His-495 contributes to the Zn(2+) binding site. Positions 575, 578, and 583 each coordinate [4Fe-4S] cluster.

It belongs to the ThiC family. In terms of assembly, homodimer. Requires [4Fe-4S] cluster as cofactor.

The enzyme catalyses 5-amino-1-(5-phospho-beta-D-ribosyl)imidazole + S-adenosyl-L-methionine = 4-amino-2-methyl-5-(phosphooxymethyl)pyrimidine + CO + 5'-deoxyadenosine + formate + L-methionine + 3 H(+). It functions in the pathway cofactor biosynthesis; thiamine diphosphate biosynthesis. Functionally, catalyzes the synthesis of the hydroxymethylpyrimidine phosphate (HMP-P) moiety of thiamine from aminoimidazole ribotide (AIR) in a radical S-adenosyl-L-methionine (SAM)-dependent reaction. This chain is Phosphomethylpyrimidine synthase, found in Saccharophagus degradans (strain 2-40 / ATCC 43961 / DSM 17024).